The primary structure comprises 319 residues: NADH-ubiquinone oxidoreductase chain 1 (319 aa).

The next 8 helical transmembrane spans lie at Leu3 to Phe23, Leu74 to Pro94, Ile106 to Ala126, Thr149 to Phe169, Ala175 to Ala195, Leu226 to Phe246, Leu254 to Val274, and Phe294 to Gly314.

Belongs to the complex I subunit 1 family.

It localises to the mitochondrion inner membrane. It carries out the reaction a ubiquinone + NADH + 5 H(+)(in) = a ubiquinol + NAD(+) + 4 H(+)(out). Its function is as follows. Core subunit of the mitochondrial membrane respiratory chain NADH dehydrogenase (Complex I) that is believed to belong to the minimal assembly required for catalysis. Complex I functions in the transfer of electrons from NADH to the respiratory chain. The immediate electron acceptor for the enzyme is believed to be ubiquinone. The sequence is that of NADH-ubiquinone oxidoreductase chain 1 (MT-ND1) from Polypterus ornatipinnis (Ornate bichir).